The sequence spans 304 residues: Fluoroacetate dehalogenase (304 aa).

An AB hydrolase-1 domain is found at 26–151 (PALLLLHGFP…FVARAYWHWY (126 aa)). Asp104 (nucleophile) is an active-site residue. Fluoroacetate-binding residues include Arg105, Arg108, His149, Trp150, and Tyr212. The active-site Proton acceptor is His271.

It belongs to the AB hydrolase superfamily. Epoxide hydrolase family. As to quaternary structure, homodimer.

It carries out the reaction a haloacetate + H2O = a halide anion + glycolate + H(+). The enzyme catalyses fluoroacetate + H2O = fluoride + glycolate + H(+). In terms of biological role, catalyzes the hydrolytic defluorination of fluoroacetate to produce glycolate. Has only very low activity towards chloroacetate and bromoacetate. The sequence is that of Fluoroacetate dehalogenase (fac-dex) from Burkholderia sp.